The following is a 351-amino-acid chain: Alternative oxidase, mitochondrial (351 aa).

A helical membrane pass occupies residues 147-167 (LTRFIFLESVAGVPGMVGGML). Fe cation-binding residues include glutamate 154, glutamate 193, and histidine 196. The helical transmembrane segment at 212-232 (LMVLGAQGVFFNGFFLSYLMS) threads the bilayer. Residues glutamate 244, glutamate 245, glutamate 299, and histidine 302 each contribute to the Fe cation site. A disordered region spans residues 322-351 (AAKYKDPTKAHPNKGIADLKPTGWEREEVI).

The protein belongs to the alternative oxidase family. It depends on Fe cation as a cofactor.

Its subcellular location is the mitochondrion inner membrane. In terms of biological role, catalyzes cyanide-resistant oxygen consumption. May increase respiration when the cytochrome respiratory pathway is restricted, or in response to low temperatures. In Aspergillus niger, this protein is Alternative oxidase, mitochondrial (aox1).